The primary structure comprises 97 residues: uncharacterized protein (97 aa).

Ser-2 is modified (N-acetylserine).

This is an uncharacterized protein from Mycobacterium tuberculosis (strain ATCC 25618 / H37Rv).